The sequence spans 125 residues: Diol dehydratase-reactivating factor small subunit (125 aa).

Glu-31 lines the Mg(2+) pocket.

Belongs to the DdrB/PduH family. Component of the DDR complex, a heterotetramer of DdrA(2)/DdrB(2). The DDR complex interacts with the diol dehydratase complex in the presence of ADP but not ATP. Mg(2+) is required as a cofactor.

The enzyme catalyses ATP + H2O = ADP + phosphate + H(+). Its function is as follows. Small subunit of the diol dehydratase-reactivating factor (DDR), which reactivates suicidally inhibited adenosylcobalamin-dependent diol dehydratase (DD, pddA, pddB, pddC). DDR acts as a chaperone, reactivates inactivated DD holoenzyme in the presence of ATP, Mg(2+) and free adenosylcobalamin (AdoCbl), by mediating the exchange of the tightly bound damaged cofactor AdoCbl for a free intact one. Reactivation takes place in two steps: ADP-dependent cobalamin release, and ATP-dependent dissociation of the DD apoenzyme-DDR complex. DDR has weak ATPase activity which is required for DD reactivation. Activates glycerol-inactivated, O2-inactivated holoenzyme and inactivated enzyme-cyanocobalamin complex. Also reactivates glycerol-inactivated hologlycerol dehydratase, a DD isozyme. The chain is Diol dehydratase-reactivating factor small subunit from Klebsiella michiganensis (strain ATCC 8724 / DSM 4798 / JCM 20051 / NBRC 3318 / NRRL B-199 / KCTC 1686 / BUCSAV 143 / CCM 1901).